Here is a 539-residue protein sequence, read N- to C-terminus: Chaperonin GroEL (539 aa).

ATP contacts are provided by residues threonine 30–proline 33, lysine 51, aspartate 87–threonine 91, glycine 415, asparagine 479–alanine 481, and aspartate 495.

It belongs to the chaperonin (HSP60) family. Forms a cylinder of 14 subunits composed of two heptameric rings stacked back-to-back. Interacts with the co-chaperonin GroES.

The protein localises to the cytoplasm. The enzyme catalyses ATP + H2O + a folded polypeptide = ADP + phosphate + an unfolded polypeptide.. In terms of biological role, together with its co-chaperonin GroES, plays an essential role in assisting protein folding. The GroEL-GroES system forms a nano-cage that allows encapsulation of the non-native substrate proteins and provides a physical environment optimized to promote and accelerate protein folding. This chain is Chaperonin GroEL, found in Enterobacter agglomerans (Erwinia herbicola).